A 324-amino-acid chain; its full sequence is Glutathione synthetase (324 aa).

Residues 129–313 (KLYALHFPDL…LEDEIVDWLV (185 aa)) enclose the ATP-grasp domain. Residue 155–211 (VDIHGRAVIKPLDGKGGEGIFLLARADRNLNAIIEASTAYGTRHVMVQRYLEESRQG) participates in ATP binding. Glu-284 and Asn-286 together coordinate Mg(2+).

This sequence belongs to the prokaryotic GSH synthase family. The cofactor is Mg(2+). Mn(2+) is required as a cofactor.

The catalysed reaction is gamma-L-glutamyl-L-cysteine + glycine + ATP = glutathione + ADP + phosphate + H(+). The protein operates within sulfur metabolism; glutathione biosynthesis; glutathione from L-cysteine and L-glutamate: step 2/2. This Gloeobacter violaceus (strain ATCC 29082 / PCC 7421) protein is Glutathione synthetase.